The sequence spans 696 residues: Glycosyltransferase GlyA (696 aa).

The GT2 domain stretch occupies residues 1–301 (MLVDDKITVI…NQLSRQEESE (301 aa)). The GT8 domain stretch occupies residues 302-556 (KKAIVLAANY…TELGQNHHLH (255 aa)). UDP contacts are provided by residues 308–313 (AANYGY) and 399–400 (DC). The Mn(2+) site is built by Asp-399, Asp-401, and His-518. Residue 518–524 (HYLSHRK) participates in UDP binding.

This sequence in the N-terminal section; belongs to the glycosyltransferase 2 family. In the central section; belongs to the glycosyltransferase 8 family.

Its pathway is protein modification; protein glycosylation. Functionally, involved in the polymorphic O-glycosylation of the serine-rich repeat protein PsrP. Catalyzes the fourth step in glycosylation of PsrP in this bacteria. Can transfer the sugar from UDP-galactose to the terminal sugar moiety of PsrP-GlcNAc-Glc-Gal or of PsrP-GlcNAc-Glc-Glc (using truncated substrates with the PsrP SSR1 domain). Has hydrolytic activity against UDP-galactose and to a lesser extent against UDP-glucose. The polypeptide is Glycosyltransferase GlyA (Streptococcus pneumoniae serotype 4 (strain ATCC BAA-334 / TIGR4)).